A 65-amino-acid chain; its full sequence is ITYTDCTESGQDLCLCEGSNVCGKGNKCILGSNGEENQCVTGEGTPKPQSHNDGDFEEIPEEYLQ.

An interaction with thrombin active site region spans residues Ile-1 to Tyr-3. 3 disulfide bridges follow: Cys-6/Cys-14, Cys-16/Cys-28, and Cys-22/Cys-39. Residues Cys-39–Gln-65 are disordered. O-linked (GalNAc...) threonine glycosylation occurs at Thr-45. The interval Asp-55–Gln-65 is interaction with fibrinogen-binding exosite of thrombin. Residues Asp-55–Gln-65 show a composition bias toward acidic residues. Tyr-63 is subject to Sulfotyrosine.

This sequence belongs to the protease inhibitor I14 (hirudin) family.

The protein localises to the secreted. Its function is as follows. Hirudin is a potent thrombin-specific protease inhibitor. It forms a stable non-covalent complex with alpha-thrombin, thereby abolishing its ability to cleave fibrinogen. The polypeptide is Hirudin-2 (Hirudo medicinalis (Medicinal leech)).